Here is a 159-residue protein sequence, read N- to C-terminus: Large ribosomal subunit protein uL15 (159 aa).

The segment covering 1–18 (MKLNEIRDNEGSSKDRIR) has biased composition (basic and acidic residues). The interval 1 to 37 (MKLNEIRDNEGSSKDRIRVGRGIGSGKGKTGGRGVKG) is disordered. Positions 21-35 (RGIGSGKGKTGGRGV) are enriched in gly residues.

It belongs to the universal ribosomal protein uL15 family. In terms of assembly, part of the 50S ribosomal subunit.

Functionally, binds to the 23S rRNA. The polypeptide is Large ribosomal subunit protein uL15 (Agrobacterium fabrum (strain C58 / ATCC 33970) (Agrobacterium tumefaciens (strain C58))).